The following is a 178-amino-acid chain: Large ribosomal subunit protein uL6 (178 aa).

It belongs to the universal ribosomal protein uL6 family. Part of the 50S ribosomal subunit.

Functionally, this protein binds to the 23S rRNA, and is important in its secondary structure. It is located near the subunit interface in the base of the L7/L12 stalk, and near the tRNA binding site of the peptidyltransferase center. This chain is Large ribosomal subunit protein uL6, found in Streptococcus pneumoniae serotype 19F (strain G54).